The sequence spans 338 residues: MKLKDFDYYLPEELIAQTPLEKRDESRLLVLKRQTGEITHDVFKNLKKYLVPGDLLVVNKTRVIPARLFGVREQGGEVEILLVKRMNFREWEVLVKPGRRARVGTRLIFAPGVLEGEIVAQTEVGRIIKFSFQGVFEEILNQLGQTPLPPYIKEKLKDPERYQTIYAKEPGSAAAPTAGLHFTRELISELKDYGVEFAEVLLHVGLGTFKPVKTENILEHKMHEEYYEIENEAAEKVNKAKREGRRVIAVGTTVVRVLESVADKGQVAPAKGYTDLFIYPGFNFQIIDGLITNFHLPKSTLLMLVSAFAGREKVLNAYEIAVRLRYRFFSFGDAMLII.

The protein belongs to the QueA family. In terms of assembly, monomer.

Its subcellular location is the cytoplasm. It carries out the reaction 7-aminomethyl-7-carbaguanosine(34) in tRNA + S-adenosyl-L-methionine = epoxyqueuosine(34) in tRNA + adenine + L-methionine + 2 H(+). It functions in the pathway tRNA modification; tRNA-queuosine biosynthesis. Transfers and isomerizes the ribose moiety from AdoMet to the 7-aminomethyl group of 7-deazaguanine (preQ1-tRNA) to give epoxyqueuosine (oQ-tRNA). The polypeptide is S-adenosylmethionine:tRNA ribosyltransferase-isomerase (Carboxydothermus hydrogenoformans (strain ATCC BAA-161 / DSM 6008 / Z-2901)).